The primary structure comprises 439 residues: Forkhead box protein J1-B (439 aa).

Positions 124-218 form a DNA-binding region, fork-head; the sequence is KPPYSYATLI…MNGAMKKRRL (95 aa).

This sequence belongs to the FOXJ1 family.

The protein resides in the nucleus. Key transcription factor required for motile ciliogenesis. Activates genes essential for motile cilia formation and function. This chain is Forkhead box protein J1-B (foxj1-b), found in Xenopus laevis (African clawed frog).